Here is a 311-residue protein sequence, read N- to C-terminus: Glycerol-3-phosphate dehydrogenase [NAD(P)+] (311 aa).

4 residues coordinate NADPH: tryptophan 11, arginine 30, arginine 31, and lysine 95. 3 residues coordinate sn-glycerol 3-phosphate: lysine 95, glycine 123, and serine 125. Alanine 127 serves as a coordination point for NADPH. Residues lysine 177, aspartate 230, serine 240, arginine 241, and asparagine 242 each coordinate sn-glycerol 3-phosphate. Lysine 177 functions as the Proton acceptor in the catalytic mechanism. Arginine 241 is an NADPH binding site. Residues valine 265 and glutamate 267 each contribute to the NADPH site.

Belongs to the NAD-dependent glycerol-3-phosphate dehydrogenase family.

It is found in the cytoplasm. It catalyses the reaction sn-glycerol 3-phosphate + NAD(+) = dihydroxyacetone phosphate + NADH + H(+). The catalysed reaction is sn-glycerol 3-phosphate + NADP(+) = dihydroxyacetone phosphate + NADPH + H(+). Its pathway is membrane lipid metabolism; glycerophospholipid metabolism. Catalyzes the reduction of the glycolytic intermediate dihydroxyacetone phosphate (DHAP) to sn-glycerol 3-phosphate (G3P), the key precursor for phospholipid synthesis. In Bartonella bacilliformis (strain ATCC 35685 / KC583 / Herrer 020/F12,63), this protein is Glycerol-3-phosphate dehydrogenase [NAD(P)+].